A 3961-amino-acid chain; its full sequence is Replicase polyprotein 1ab (3961 aa).

The segment at 8–28 (CTCTPNARVFVAEGQVYCTRC) adopts a C4-type; atypical zinc-finger fold. The Peptidase C31 domain maps to 69 to 180 (ECSPTGACWL…EDFCPFECAM (112 aa)). The tract at residues 69–182 (ECSPTGACWL…FCPFECAMAD (114 aa)) is PCP1-alpha. Catalysis depends on for Nsp1-alpha papain-like cysteine proteinase activity residues cysteine 76 and histidine 146. The segment at 199 to 200 (VS) is important for host EIF2AK2 inhibition. The interval 263-382 (DTVPEGNCWW…IFRFGSHKWY (120 aa)) is PCP1-beta. A Peptidase C32 domain is found at 263-383 (DTVPEGNCWW…FRFGSHKWYG (121 aa)). Residues cysteine 270 and histidine 339 each act as for Nsp1-beta papain-like cysteine proteinase activity in the active site. Residues 426–513 (LKLYSPPAEG…GEHWTVSVNP (88 aa)) form an OTU-like region. Residues 428–535 (LYSPPAEGNC…QGCCEHKGGL (108 aa)) form the Peptidase C33 domain. Active-site for Nsp2 cysteine proteinase activity residues include cysteine 437 and histidine 506. Residues 810 to 819 (WTPPPPPPRV) show a composition bias toward pro residues. 3 disordered regions span residues 810–875 (WTPP…FPTP), 899–918 (TPLDGSAPVPAPRRTVSRPM), and 1148–1191 (TGEL…PADT). The next 7 membrane-spanning stretches (helical) occupy residues 1266 to 1286 (FCLFLCYSYPFFGFAPLLGVF), 1296 to 1316 (GVFGCWLAFAVGLFKPVSDPV), 1368 to 1388 (VWHFLLRFGIVADCILAGAYV), 1583 to 1603 (LVAALHVACSMALHMLAGVYV), 1648 to 1668 (LTALVAGFGLQEIALVVLIFV), 1685 to 1705 (CILLAIASYVWVPLTWLLCVF), and 1719 to 1739 (ILWLVFFLISVNIPSGILAVV). Residues 1266–1388 (FCLFLCYSYP…ADCILAGAYV (123 aa)) form an HD1 region. Positions 1583–1745 (LVAALHVACS…LAVVLLVSLW (163 aa)) are HD2. One can recognise a Peptidase S32 domain in the interval 1810–2013 (GAFRTQKPSL…ALLAAKPELE (204 aa)). Active-site charge relay system; for 3C-like serine proteinase activity residues include histidine 1848, aspartate 1873, and serine 1927. 5 helical membrane passes run 2036 to 2056 (WTPLVAVGFFILNEILPAVLV), 2060 to 2080 (FSFGMFVLSWLTPWSAQVLMI), 2092 to 2112 (LSLGFYSLGAVTSFVADLAVT), 2137 to 2157 (SPVPVIACGVVHLLAIILYLF), and 2162 to 2182 (LHYVLVGDGVFSSAFFLRYFA). An HD3 region spans residues 2036-2157 (WTPLVAVGFF…HLLAIILYLF (122 aa)). A NiRAN domain is found at 2488–2651 (IIDKLQGLTK…LPYKLYPVRG (164 aa)). The RdRp catalytic domain occupies 2890 to 3024 (GRCLEADLAS…YAESPSMPNY (135 aa)). Residues 3145–3208 (GKKSRMCGYC…PPLGKGTSPL (64 aa)) form the AV ZBD domain. The Zn(2+) site is built by cysteine 3151, cysteine 3154, cysteine 3164, cysteine 3169, histidine 3172, histidine 3174, histidine 3176, histidine 3178, cysteine 3185, histidine 3187, cysteine 3194, and cysteine 3197. The (+)RNA virus helicase ATP-binding domain maps to 3265–3417 (ASTALLPTCK…VFDIMPQTQL (153 aa)). 3293–3300 (GPPGAGKT) lines the ATP pocket. A (+)RNA virus helicase C-terminal domain is found at 3418 to 3546 (KTIWRFGQNI…AVHRDEQLIV (129 aa)). In terms of domain architecture, AV-Nsp11N/CoV-Nsp15M spans 3585-3681 (EGSSSPLPKV…LTKFVRGEAQ (97 aa)). The region spanning 3683–3805 (LPETVFSTGR…MVWKGKTAYF (123 aa)) is the NendoU domain. Catalysis depends on residues histidine 3714, histidine 3729, and lysine 3758.

Belongs to the arteriviridae polyprotein family. In terms of assembly, nsp1-alpha papain-like: Interacts with host RNF31. Interacts with host EIF2AK2; this interaction occurs in host stress granules and leads to EIF2AK2 inhibition. Interacts with host G3BP1; this interaction probably plays a role in Nsp1-beta-mediated inhibition of host EIF2AK2. As to quaternary structure, interacts with host DDX18; this interaction redistributes host DDX18 to the cytoplasm. In terms of assembly, interacts with host IFITM1. Interacts with host DDX5. As to quaternary structure, interacts with host OTULIN. In terms of assembly, interacts with host LGALS3. In terms of processing, specific enzymatic cleavages in vivo by its own proteases yield mature proteins. Nsp1 is autocleaved into two subunits, Nsp1-alpha and Nsp1-beta. There are two alternative pathways for processing. Either nsp4-5 is cleaved, which represents the major pathway or the nsp5-6 and nsp6-7 are processed, which represents the minor pathway. The major pathway occurs when nsp2 acts as a cofactor for nsp4.

It localises to the host nucleus. The protein resides in the host cytoplasm. Its subcellular location is the host membrane. It is found in the host endoplasmic reticulum. The protein localises to the host perinuclear region. The enzyme catalyses RNA(n) + a ribonucleoside 5'-triphosphate = RNA(n+1) + diphosphate. The catalysed reaction is ATP + H2O = ADP + phosphate + H(+). It carries out the reaction Thiol-dependent hydrolysis of ester, thioester, amide, peptide and isopeptide bonds formed by the C-terminal Gly of ubiquitin (a 76-residue protein attached to proteins as an intracellular targeting signal).. It catalyses the reaction uridylyl-uridylyl-ribonucleotide-RNA = a 3'-end uridylyl-2',3'-cyclophospho-uridine-RNA + a 5'-end dephospho-ribonucleoside-RNA. In terms of biological role, contains the activities necessary for the transcription of negative stranded RNA, leader RNA, subgenomic mRNAs and progeny virion RNA as well as proteinases responsible for the cleavage of the polyprotein into functional products. Functionally, inhibits host IFN-beta production. Plays a role in the degradation of the host transcriptional activator CREBBP protein. The degradation of host CREBBP which is a key component of the IFN enhanceosome is likely responsible for the inhibition of interferon mediated by Nsp1-alpha. Also participates in the inhibition of host NF-kappa-B activation by counteracting LUBAC-dependent induction of NF-kappa-B. Reduces host NEMO ubiquitination by blocking the interaction between the two LUBAC complex components RNF31 and SHARPIN. Its function is as follows. Plays a role in blocking host mRNA nuclear export to the cytoplasm and subversion of host protein synthesis. Additionally, inhibits the interferon-activated JAK/STAT signal transduction by mediating the ubiquitination and subsequent proteasomal degradation of host KPNA1. Repurposes the host antiviral stress granules into a proviral platform to counteract the EIF2AK2/PKR restriction, thereby regulating the host inflammatory response. Multifunctional protein that acts as a viral protease and as a viral antagonist of host immune response. Cleaves the nsp2/nsp3 site in the viral polyprotein. Displays deubiquitinating activity that cleaves both ubiquitinated and ISGylated products and therefore inhibits ubiquitin and ISG15-dependent host innate immunity. Also deubiquinates host NFKBIA, thereby interfering with NFKBIA degradation and impairing subsequent NF-kappa-B activation. In terms of biological role, plays a role in the inhibition of the immune response by interacting with host IFITM1. This interaction leads to the proteasomal degradation of the IFN-induced antiviral protein IFITM1. Functionally, cleaves the majority of cleavage sites present in the C-terminus of the polyprotein. Triggers host apoptosis through caspase-3, -8, and -9 activations. Subverts host innate immune responses through its protease activity. Targets the NF-kappa-B essential modulator NEMO and mediates its cleavage. Blocks host interferon beta induction and downstream signaling by cleaving mitochondrial MAVS, dislodging it from the mitochondria. Impairs host defense by cleaving host mRNA-decapping enzyme DCP1A to attenuate its antiviral activity. Its function is as follows. Plays a role in the initial induction of autophagosomes from host endoplasmic reticulum. Plays a role in the inhibition of host STAT3 signaling pathway by inducing the degradation of STAT3. In terms of biological role, responsible for replication and transcription of the viral RNA genome. Functionally, displays RNA and DNA duplex-unwinding activities with 5' to 3' polarity. Its function is as follows. Plays a role in viral transcription/replication and prevents the simultaneous activation of host cell dsRNA sensors, such as MDA5/IFIH1, OAS, PKR and NLRP3 inflammasome. Acts by degrading the 5'-polyuridines generated during replication of the poly(A) region of viral genomic and subgenomic RNAs. Catalyzes a two-step reaction in which a 2'3'-cyclic phosphate (2'3'-cP) is first generated by 2'-O transesterification, which is then hydrolyzed to a 3'-phosphate (3'-P). If not degraded, poly(U) RNA would hybridize with poly(A) RNA tails and activate host dsRNA sensors. Also plays a role in the inhibition of host type I interferon production by recruiting host OTULIN to promote removal of linear ubiquitination targeting host NEMO. This is Replicase polyprotein 1ab (rep) from Porcine reproductive and respiratory syndrome virus (strain HB-1) (PRRSV).